The primary structure comprises 197 residues: NADH-quinone oxidoreductase subunit C (197 aa).

The protein belongs to the complex I 30 kDa subunit family. In terms of assembly, NDH-1 is composed of 14 different subunits. Subunits NuoB, C, D, E, F, and G constitute the peripheral sector of the complex.

The protein localises to the cell inner membrane. It carries out the reaction a quinone + NADH + 5 H(+)(in) = a quinol + NAD(+) + 4 H(+)(out). NDH-1 shuttles electrons from NADH, via FMN and iron-sulfur (Fe-S) centers, to quinones in the respiratory chain. The immediate electron acceptor for the enzyme in this species is believed to be ubiquinone. Couples the redox reaction to proton translocation (for every two electrons transferred, four hydrogen ions are translocated across the cytoplasmic membrane), and thus conserves the redox energy in a proton gradient. The chain is NADH-quinone oxidoreductase subunit C from Caulobacter vibrioides (strain ATCC 19089 / CIP 103742 / CB 15) (Caulobacter crescentus).